The following is a 376-amino-acid chain: Alcohol dehydrogenase class-3 (376 aa).

An N-acetylserine modification is found at S1. Positions 47, 69, 99, 102, 105, 113, and 176 each coordinate Zn(2+).

The protein belongs to the zinc-containing alcohol dehydrogenase family. Class-III subfamily. Homodimer. Requires Zn(2+) as cofactor. Liver and gut.

The protein resides in the cytoplasm. The catalysed reaction is a primary alcohol + NAD(+) = an aldehyde + NADH + H(+). It catalyses the reaction a secondary alcohol + NAD(+) = a ketone + NADH + H(+). It carries out the reaction S-(hydroxymethyl)glutathione + NADP(+) = S-formylglutathione + NADPH + H(+). The enzyme catalyses S-(hydroxymethyl)glutathione + NAD(+) = S-formylglutathione + NADH + H(+). The catalysed reaction is S-nitrosoglutathione + NADH + H(+) = S-(hydroxysulfenamide)glutathione + NAD(+). Its function is as follows. Class-III ADH is remarkably ineffective in oxidizing ethanol, but it readily catalyzes the oxidation of long-chain primary alcohols and the oxidation of S-(hydroxymethyl) glutathione. Also acts as a S-nitroso-glutathione reductase by catalyzing the NADH-dependent reduction of S-nitrosoglutathione, thereby regulating protein S-nitrosylation. The sequence is that of Alcohol dehydrogenase class-3 from Myxine glutinosa (Atlantic hagfish).